We begin with the raw amino-acid sequence, 23 residues long: MQRPRPPRPLSYSRSSEEAFLEA.

The tract at residues 1–23 is disordered; it reads MQRPRPPRPLSYSRSSEEAFLEA.

Belongs to the polyomavirus early leader protein family.

Its function is as follows. May play a role in the lytic cycle. This chain is SV40 early leader protein, found in Macaca (macaques).